The following is a 312-amino-acid chain: Malate dehydrogenase (312 aa).

Residues 7–13 (GAAGGIG) and Asp-34 each bind NAD(+). The substrate site is built by Arg-81 and Arg-87. NAD(+)-binding positions include Asn-94 and 117 to 119 (ITN). Substrate-binding residues include Asn-119 and Arg-153. His-177 acts as the Proton acceptor in catalysis. Residue Met-227 coordinates NAD(+).

The protein belongs to the LDH/MDH superfamily. MDH type 1 family. As to quaternary structure, homodimer.

The catalysed reaction is (S)-malate + NAD(+) = oxaloacetate + NADH + H(+). In terms of biological role, catalyzes the reversible oxidation of malate to oxaloacetate. This Salmonella choleraesuis (strain SC-B67) protein is Malate dehydrogenase.